The sequence spans 391 residues: DNA primase small subunit PriS (391 aa).

Active-site residues include Asp98, Asp100, and Asp294.

It belongs to the eukaryotic-type primase small subunit family. In terms of assembly, heterodimer of a small subunit (PriS) and a large subunit (PriL). The cofactor is Mg(2+). Mn(2+) is required as a cofactor.

Catalytic subunit of DNA primase, an RNA polymerase that catalyzes the synthesis of short RNA molecules used as primers for DNA polymerase during DNA replication. The small subunit contains the primase catalytic core and has DNA synthesis activity on its own. Binding to the large subunit stabilizes and modulates the activity, increasing the rate of DNA synthesis while decreasing the length of the DNA fragments, and conferring RNA synthesis capability. The DNA polymerase activity may enable DNA primase to also catalyze primer extension after primer synthesis. May also play a role in DNA repair. This chain is DNA primase small subunit PriS, found in Halobacterium salinarum (strain ATCC 29341 / DSM 671 / R1).